The following is a 120-amino-acid chain: U13-barytoxin-Tl1a (120 aa).

An N-terminal signal peptide occupies residues methionine 1 to alanine 20. Intrachain disulfides connect cysteine 75-cysteine 90, cysteine 82-cysteine 95, and cysteine 89-cysteine 109.

Belongs to the neurotoxin 14 (magi-1) family. 05 (ICK-7) subfamily. ICK-7 sub-subfamily. As to expression, expressed by the venom gland.

It localises to the secreted. Ion channel inhibitor. The chain is U13-barytoxin-Tl1a from Trittame loki (Brush-footed trapdoor spider).